A 385-amino-acid polypeptide reads, in one-letter code: Putative cell agglutination protein pfl8 (385 aa).

The signal sequence occupies residues 1–20 (MNSYISLIFTLLFFTSAARS). The interval 41–90 (SSEFTSTITPETPSSSSSTFVPISTHTSSATNTTSGQLSISSSSSTSSEY) is disordered. N-linked (GlcNAc...) asparagine glycans are attached at residues Asn-72, Asn-270, and Asn-346. The PA14 domain occupies 196–360 (EVSTFNKPAY…GPVRTTSYSY (165 aa)).

Its subcellular location is the secreted. It localises to the cell surface. Its function is as follows. May be involved in agglutination during conjugation or other aspects of colony formation. Induces flocculation when overexpressed. This is Putative cell agglutination protein pfl8 from Schizosaccharomyces pombe (strain 972 / ATCC 24843) (Fission yeast).